Consider the following 434-residue polypeptide: MQSEAQSPRSSQICSTEPVFGGHAPRRVSHAVDVRWGGTLVTIGGAAPVRVQSMTNTDTADAIGTAIQVKELANAGSELVRITVNTPEAAAAVPAIREQLDRMGVTVPLVGDFHYNGHLLLRDYPDCAQALSKYRINPGNVGQGAKRDSQFAQMIEAAIKYDKPVRIGVNWGSLDQDLLARMMDENGARAEPWEAQSVMYEALIQSAIGSAERAVELGLGRDKIVLSCKVSGVQDLVAVYRELSRRCGFALHLGLTEAGMGSKGIVASTAAIGLLLQEGIGDTIRISLTPEPGAPRTGEVVVGQEILQTMGLRSFAPMVVACPGCGRTTSTLFQELALRIQTYLREQMPVWRSEYPGVEKMNVAVMGCIVNGPGESKHANIGISLPGSGENPAAPVFVDGEKVKTLRGEHIAEEFQQIVSDYVARTYGRAAAQN.

Residues methionine 1 to serine 15 are compositionally biased toward polar residues. A disordered region spans residues methionine 1–phenylalanine 20. Residues cysteine 322, cysteine 325, cysteine 368, and glutamate 375 each coordinate [4Fe-4S] cluster.

It belongs to the IspG family. Requires [4Fe-4S] cluster as cofactor.

The catalysed reaction is (2E)-4-hydroxy-3-methylbut-2-enyl diphosphate + oxidized [flavodoxin] + H2O + 2 H(+) = 2-C-methyl-D-erythritol 2,4-cyclic diphosphate + reduced [flavodoxin]. It functions in the pathway isoprenoid biosynthesis; isopentenyl diphosphate biosynthesis via DXP pathway; isopentenyl diphosphate from 1-deoxy-D-xylulose 5-phosphate: step 5/6. Functionally, converts 2C-methyl-D-erythritol 2,4-cyclodiphosphate (ME-2,4cPP) into 1-hydroxy-2-methyl-2-(E)-butenyl 4-diphosphate. This is 4-hydroxy-3-methylbut-2-en-1-yl diphosphate synthase (flavodoxin) from Burkholderia mallei (strain ATCC 23344).